Reading from the N-terminus, the 274-residue chain is 2,3,4,5-tetrahydropyridine-2,6-dicarboxylate N-succinyltransferase (274 aa).

Substrate contacts are provided by Arg104 and Asp141.

The protein belongs to the transferase hexapeptide repeat family. In terms of assembly, homotrimer.

It localises to the cytoplasm. It catalyses the reaction (S)-2,3,4,5-tetrahydrodipicolinate + succinyl-CoA + H2O = (S)-2-succinylamino-6-oxoheptanedioate + CoA. Its pathway is amino-acid biosynthesis; L-lysine biosynthesis via DAP pathway; LL-2,6-diaminopimelate from (S)-tetrahydrodipicolinate (succinylase route): step 1/3. The protein is 2,3,4,5-tetrahydropyridine-2,6-dicarboxylate N-succinyltransferase of Buchnera aphidicola subsp. Baizongia pistaciae (strain Bp).